The following is a 190-amino-acid chain: Nucleoside triphosphate pyrophosphatase (190 aa).

The Proton acceptor role is filled by aspartate 69.

Belongs to the Maf family. A divalent metal cation is required as a cofactor.

Its subcellular location is the cytoplasm. The catalysed reaction is a ribonucleoside 5'-triphosphate + H2O = a ribonucleoside 5'-phosphate + diphosphate + H(+). It catalyses the reaction a 2'-deoxyribonucleoside 5'-triphosphate + H2O = a 2'-deoxyribonucleoside 5'-phosphate + diphosphate + H(+). In terms of biological role, nucleoside triphosphate pyrophosphatase. May have a dual role in cell division arrest and in preventing the incorporation of modified nucleotides into cellular nucleic acids. This chain is Nucleoside triphosphate pyrophosphatase, found in Helicobacter pylori (strain HPAG1).